Reading from the N-terminus, the 489-residue chain is Putative ATP-dependent RNA helicase T26G10.1 (489 aa).

Positions 44-72 match the Q motif motif; sequence KSFAELGVSQPLCDACQRLGWMKPSKIQQ. One can recognise a Helicase ATP-binding domain in the interval 75 to 246; the sequence is LPHALQGKDV…RASLRDPARV (172 aa). 88–95 provides a ligand contact to ATP; that stretch reads AETGSGKT. Positions 194-197 match the DEAD box motif; it reads DEAD. A Helicase C-terminal domain is found at 257 to 417; that stretch reads NLKQHYIFVP…EYKCVENEVM (161 aa). Positions 433-489 are disordered; it reads EMKEMDEKKKSGKKRRQNDDFGDTEESGGRFKMGIKSMGGRGGSGGGRGGKKKKMSK. Residues 469-480 are compositionally biased toward gly residues; sequence SMGGRGGSGGGR.

It belongs to the DEAD box helicase family. DDX47/RRP3 subfamily.

Its subcellular location is the nucleus. It carries out the reaction ATP + H2O = ADP + phosphate + H(+). In terms of biological role, probable ATP-dependent RNA helicase which may be involved in ribosome biogenesis. This Caenorhabditis elegans protein is Putative ATP-dependent RNA helicase T26G10.1.